The following is a 703-amino-acid chain: Elongation factor G (703 aa).

Residues 8 to 290 (ARYRNIGICA…AVIEYLPAPT (283 aa)) form the tr-type G domain. GTP is bound by residues 17–24 (AHVDAGKT), 88–92 (DTPGH), and 142–145 (NKMD).

The protein belongs to the TRAFAC class translation factor GTPase superfamily. Classic translation factor GTPase family. EF-G/EF-2 subfamily.

It is found in the cytoplasm. Functionally, catalyzes the GTP-dependent ribosomal translocation step during translation elongation. During this step, the ribosome changes from the pre-translocational (PRE) to the post-translocational (POST) state as the newly formed A-site-bound peptidyl-tRNA and P-site-bound deacylated tRNA move to the P and E sites, respectively. Catalyzes the coordinated movement of the two tRNA molecules, the mRNA and conformational changes in the ribosome. The chain is Elongation factor G from Teredinibacter turnerae (strain ATCC 39867 / T7901).